A 308-amino-acid polypeptide reads, in one-letter code: Porphobilinogen deaminase (308 aa).

C241 bears the S-(dipyrrolylmethanemethyl)cysteine mark.

The protein belongs to the HMBS family. As to quaternary structure, monomer. Requires dipyrromethane as cofactor.

It catalyses the reaction 4 porphobilinogen + H2O = hydroxymethylbilane + 4 NH4(+). It participates in porphyrin-containing compound metabolism; protoporphyrin-IX biosynthesis; coproporphyrinogen-III from 5-aminolevulinate: step 2/4. Its function is as follows. Tetrapolymerization of the monopyrrole PBG into the hydroxymethylbilane pre-uroporphyrinogen in several discrete steps. This is Porphobilinogen deaminase from Staphylococcus aureus (strain Newman).